A 174-amino-acid chain; its full sequence is UPF0340 protein SE_1711 (174 aa).

The protein belongs to the UPF0340 family.

This is UPF0340 protein SE_1711 from Staphylococcus epidermidis (strain ATCC 12228 / FDA PCI 1200).